The sequence spans 474 residues: PRAME family member 14 (474 aa).

LRR repeat units follow at residues 15–38 (QSLL…LYLP), 204–229 (LNSI…CYLK), 271–294 (LLKI…LQNP), 319–342 (LGYL…PLGA), and 391–414 (MGAL…TYPA).

Belongs to the PRAME family.

This Homo sapiens (Human) protein is PRAME family member 14.